The chain runs to 180 residues: Large ribosomal subunit protein uL6 (180 aa).

Residues 158-180 are disordered; the sequence is YSGKGISYKGEKIRRKEGKTASK.

It belongs to the universal ribosomal protein uL6 family. In terms of assembly, part of the 50S ribosomal subunit.

Functionally, this protein binds to the 23S rRNA, and is important in its secondary structure. It is located near the subunit interface in the base of the L7/L12 stalk, and near the tRNA binding site of the peptidyltransferase center. In Mycoplasmopsis synoviae (strain 53) (Mycoplasma synoviae), this protein is Large ribosomal subunit protein uL6.